The following is an 89-amino-acid chain: Acyl carrier protein MbtL (89 aa).

The Carrier domain occupies 7–82 (ESVSAALTEI…DLEAAIQAKV (76 aa)). The residue at position 42 (Ser42) is an O-(pantetheine 4'-phosphoryl)serine.

Post-translationally, 4'-phosphopantetheine is transferred from CoA to a specific serine of apo-ACP, leading to the activated holo-ACP form.

The protein localises to the cytoplasm. It participates in siderophore biosynthesis; mycobactin biosynthesis. Acyl carrier protein involved in the formation of acyl-S-ACP intermediates within the mycobactin biosynthesis process. This Mycobacterium sp. (strain MCS) protein is Acyl carrier protein MbtL (mbtL).